Here is a 307-residue protein sequence, read N- to C-terminus: Metapyrocatechase (307 aa).

VOC domains lie at 7–122 and 150–269; these read RPGH…LYAD and RFDH…VFCG. Fe cation is bound by residues histidine 153, histidine 214, and glutamate 265.

The protein belongs to the extradiol ring-cleavage dioxygenase family. In terms of assembly, homotetramer. The cofactor is Fe(2+).

The enzyme catalyses catechol + O2 = (2Z,4E)-2-hydroxy-6-oxohexa-2,4-dienoate + H(+). It participates in aromatic compound metabolism; benzoate degradation via hydroxylation. The polypeptide is Metapyrocatechase (dmpB) (Pseudomonas sp. (strain CF600)).